A 932-amino-acid polypeptide reads, in one-letter code: Protein translocase subunit SecA (932 aa).

ATP contacts are provided by residues Gln87, 105–109 (GEGKT), and Asp515. The Zn(2+) site is built by Cys916, Cys918, Cys927, and His928.

It belongs to the SecA family. As to quaternary structure, monomer and homodimer. Part of the essential Sec protein translocation apparatus which comprises SecA, SecYEG and auxiliary proteins SecDF-YajC and YidC. It depends on Zn(2+) as a cofactor.

The protein resides in the cell inner membrane. Its subcellular location is the cytoplasm. It catalyses the reaction ATP + H2O + cellular proteinSide 1 = ADP + phosphate + cellular proteinSide 2.. Part of the Sec protein translocase complex. Interacts with the SecYEG preprotein conducting channel. Has a central role in coupling the hydrolysis of ATP to the transfer of proteins into and across the cell membrane, serving both as a receptor for the preprotein-SecB complex and as an ATP-driven molecular motor driving the stepwise translocation of polypeptide chains across the membrane. In Burkholderia multivorans (strain ATCC 17616 / 249), this protein is Protein translocase subunit SecA.